We begin with the raw amino-acid sequence, 955 residues long: RNA polymerase-associated protein RapA (955 aa).

The Helicase ATP-binding domain occupies 163 to 333; sequence EVGHRYAPRV…FARLRLLDPE (171 aa). 176–183 contributes to the ATP binding site; that stretch reads DEVGLGKT. A DEAH box motif is present at residues 279–282; it reads DEAH. A Helicase C-terminal domain is found at 478-642; the sequence is RVDWLLELLL…AVRDELFELL (165 aa).

Belongs to the SNF2/RAD54 helicase family. RapA subfamily. As to quaternary structure, interacts with the RNAP. Has a higher affinity for the core RNAP than for the holoenzyme. Its ATPase activity is stimulated by binding to RNAP.

Its function is as follows. Transcription regulator that activates transcription by stimulating RNA polymerase (RNAP) recycling in case of stress conditions such as supercoiled DNA or high salt concentrations. Probably acts by releasing the RNAP, when it is trapped or immobilized on tightly supercoiled DNA. Does not activate transcription on linear DNA. Probably not involved in DNA repair. The sequence is that of RNA polymerase-associated protein RapA from Aeromonas salmonicida (strain A449).